A 743-amino-acid polypeptide reads, in one-letter code: Threonine--tRNA ligase (743 aa).

Low complexity predominate over residues 1 to 15; sequence MSADSPSSPASSQAA. A disordered region spans residues 1–30; sequence MSADSPSSPASSQAAEVQVRLPDGSLKTQP. A TGS domain is found at 13–76; the sequence is QAAEVQVRLP…GEIADDENVV (64 aa). The interval 264-619 is catalytic; the sequence is DHRVLGKQHG…LIEHFAGAFP (356 aa). The insert stretch occupies residues 354–404; it reads AWSTRLDKDDLSKDDEDKLIAAAEVFGVKLPDYKPSASNDAKKDVLHRWQL. Zn(2+) contacts are provided by C416, H467, and H596.

The protein belongs to the class-II aminoacyl-tRNA synthetase family. Homodimer. Zn(2+) is required as a cofactor.

It localises to the cytoplasm. The enzyme catalyses tRNA(Thr) + L-threonine + ATP = L-threonyl-tRNA(Thr) + AMP + diphosphate + H(+). Catalyzes the attachment of threonine to tRNA(Thr) in a two-step reaction: L-threonine is first activated by ATP to form Thr-AMP and then transferred to the acceptor end of tRNA(Thr). Also edits incorrectly charged L-seryl-tRNA(Thr). This chain is Threonine--tRNA ligase, found in Rhodopirellula baltica (strain DSM 10527 / NCIMB 13988 / SH1).